The sequence spans 127 residues: Small ribosomal subunit protein uS12 (127 aa).

Residue Asp89 is modified to 3-methylthioaspartic acid. The segment at 101–127 (ALDTSGVAGRTQRRSKYGAKRPKEAKK) is disordered. Basic residues predominate over residues 111 to 127 (TQRRSKYGAKRPKEAKK).

Belongs to the universal ribosomal protein uS12 family. As to quaternary structure, part of the 30S ribosomal subunit. Contacts proteins S8 and S17. May interact with IF1 in the 30S initiation complex.

Functionally, with S4 and S5 plays an important role in translational accuracy. In terms of biological role, interacts with and stabilizes bases of the 16S rRNA that are involved in tRNA selection in the A site and with the mRNA backbone. Located at the interface of the 30S and 50S subunits, it traverses the body of the 30S subunit contacting proteins on the other side and probably holding the rRNA structure together. The combined cluster of proteins S8, S12 and S17 appears to hold together the shoulder and platform of the 30S subunit. In Flavobacterium johnsoniae (strain ATCC 17061 / DSM 2064 / JCM 8514 / BCRC 14874 / CCUG 350202 / NBRC 14942 / NCIMB 11054 / UW101) (Cytophaga johnsonae), this protein is Small ribosomal subunit protein uS12.